Reading from the N-terminus, the 549-residue chain is Indole-3-acetic acid-amido synthetase GH3.2 (549 aa).

This sequence belongs to the IAA-amido conjugating enzyme family. In terms of tissue distribution, expressed in flowers, pollen, cotyledons, stipules, true leaves, hypocotyls, and all parts of the roots except for the primary root tips.

Its function is as follows. Catalyzes the synthesis of indole-3-acetic acid (IAA)-amino acid conjugates, providing a mechanism for the plant to cope with the presence of excess auxin. Strongly reactive with Glu, Gln, Trp, Asp, Ala, Leu, Phe, Gly, Tyr, Met, Ile and Val. Little or no product formation with His, Ser, Thr, Arg, Lys, or Cys. Also active on pyruvic and butyric acid analogs of IAA, PAA and the synthetic auxin naphthaleneacetic acid (NAA). The two chlorinated synthetic auxin herbicides 2,4-D and 3,6-dichloro-o-anisic acid (dicamba) cannot be used as substrates. The polypeptide is Indole-3-acetic acid-amido synthetase GH3.2 (GH3.2) (Arabidopsis thaliana (Mouse-ear cress)).